The sequence spans 276 residues: Putative ankyrin repeat protein R838 (276 aa).

4 ANK repeats span residues Asp134–Ser163, Asp164–Ser193, Asn195–Ala223, and Asn225–Ser253. Residues Val254 to Asn276 form a disordered region. The span at Ser255–Asn276 shows a compositional bias: acidic residues.

In Acanthamoeba polyphaga (Amoeba), this protein is Putative ankyrin repeat protein R838.